We begin with the raw amino-acid sequence, 315 residues long: Malate dehydrogenase (315 aa).

Residues 7 to 12 (GAGNIG) and Asp-32 each bind NAD(+). Substrate-binding residues include Arg-81 and Arg-87. NAD(+) is bound by residues Asn-94 and 117-119 (VTN). Substrate is bound by residues Asn-119 and Arg-150. The active-site Proton acceptor is His-174.

The protein belongs to the LDH/MDH superfamily. MDH type 3 family.

It catalyses the reaction (S)-malate + NAD(+) = oxaloacetate + NADH + H(+). Functionally, catalyzes the reversible oxidation of malate to oxaloacetate. The polypeptide is Malate dehydrogenase (Neorickettsia sennetsu (strain ATCC VR-367 / Miyayama) (Ehrlichia sennetsu)).